A 241-amino-acid polypeptide reads, in one-letter code: MNLLSSFPPPADGVRRLQPGTEAVVGGRGLGPGTLYIAESRLSWLNGSGLGFSLEYPSISLHAISRDTAAYPEEHLYVMVNSKLADKEDKEAHMADQEEEESEDDDDDEEPITEIRFVPGEKSDLGEMFSAMCDCQALHPDPEDADSDDDYEGDEYDVEAHEQGQVDVPTFYTYEEGLSHLTTEGQATLERLENMLSNSIGNQHTMAGVRTEGPALEPEDGMDVENTQTVAGQFEDADVDH.

A disordered region spans residues 88–112 (EDKEAHMADQEEEESEDDDDDEEPI). The span at 97–112 (QEEEESEDDDDDEEPI) shows a compositional bias: acidic residues.

This sequence belongs to the pICln (TC 1.A.47) family. In terms of assembly, component of the methylosome, a 20S complex containing at least clns1a/picln, prmt5/skb1 and wdr77/mep50; may mediate snrpd1 and snrpd3 methylation. Forms a 6S pICln-Sm complex composed of clns1a/picln, snrpd1, snrpd2, snrpe, snrpf and snrpg; ring-like structure where clns1a/pICln mimics additional Sm proteins and which is unable to assemble into the core snRNP.

The protein localises to the cytoplasm. It is found in the cytosol. It localises to the nucleus. Its subcellular location is the cytoskeleton. In terms of biological role, involved in both the assembly of spliceosomal snRNPs and the methylation of Sm proteins. Chaperone that regulates the assembly of spliceosomal U1, U2, U4 and U5 small nuclear ribonucleoproteins (snRNPs), the building blocks of the spliceosome, and thereby plays an important role in the splicing of cellular pre-mRNAs. Most spliceosomal snRNPs contain a common set of Sm proteins SNRPB, SNRPD1, SNRPD2, SNRPD3, SNRPE, SNRPF and SNRPG that assemble in a heptameric protein ring on the Sm site of the small nuclear RNA to form the core snRNP (Sm core). In the cytosol, the Sm proteins SNRPD1, SNRPD2, SNRPE, SNRPF and SNRPG are trapped in an inactive 6S pICln-Sm complex by the chaperone CLNS1A that controls the assembly of the core snRNP. Dissociation by the SMN complex of CLNS1A from the trapped Sm proteins and their transfer to an SMN-Sm complex triggers the assembly of core snRNPs and their transport to the nucleus. This is Methylosome subunit pICln (clns1a) from Xenopus laevis (African clawed frog).